The sequence spans 373 residues: L-threonine 3-dehydrogenase, mitochondrial (373 aa).

NAD(+) is bound by residues 62–67 (GGLGQL), 88–90 (DIR), 106–107 (DI), Tyr-195, Lys-199, and Ile-225. Catalysis depends on Tyr-195, which acts as the Proton donor/acceptor.

This sequence belongs to the NAD(P)-dependent epimerase/dehydratase family. As to quaternary structure, homodimer.

It is found in the mitochondrion. It carries out the reaction L-threonine + NAD(+) = (2S)-2-amino-3-oxobutanoate + NADH + H(+). Its pathway is amino-acid degradation; L-threonine degradation via oxydo-reductase pathway; glycine from L-threonine: step 1/2. Catalyzes the NAD(+)-dependent oxidation of L-threonine to 2-amino-3-ketobutyrate, mediating L-threonine catabolism. The protein is L-threonine 3-dehydrogenase, mitochondrial of Bos taurus (Bovine).